Reading from the N-terminus, the 675-residue chain is Acetyl-coenzyme A synthetase 1 (675 aa).

Positions 1–10 are enriched in polar residues; that stretch reads MPESTQQSHL. The disordered stretch occupies residues 1 to 32; the sequence is MPESTQQSHLSLDHEKMQQPPKGFTERSKTKP. CoA contacts are provided by residues 212 to 215 and threonine 331; that span reads RGGK. ATP contacts are provided by residues 407–409, 431–436, aspartate 522, and arginine 537; these read GEP and DTYWQT. Serine 545 provides a ligand contact to CoA. Arginine 548 lines the ATP pocket. Arginine 609 contributes to the CoA binding site.

It belongs to the ATP-dependent AMP-binding enzyme family.

The enzyme catalyses acetate + ATP + CoA = acetyl-CoA + AMP + diphosphate. The polypeptide is Acetyl-coenzyme A synthetase 1 (ACS1) (Candida albicans (Yeast)).